Consider the following 280-residue polypeptide: Large ribosomal subunit protein uL2 (280 aa).

Disordered regions lie at residues 27–59 and 225–280; these read STPE…GGHK and VMNP…KHSR. Basic residues-rich tracts occupy residues 37 to 59 and 268 to 280; these read LHGR…GGHK and IVRR…KHSR.

The protein belongs to the universal ribosomal protein uL2 family. As to quaternary structure, part of the 50S ribosomal subunit. Forms a bridge to the 30S subunit in the 70S ribosome.

Functionally, one of the primary rRNA binding proteins. Required for association of the 30S and 50S subunits to form the 70S ribosome, for tRNA binding and peptide bond formation. It has been suggested to have peptidyltransferase activity; this is somewhat controversial. Makes several contacts with the 16S rRNA in the 70S ribosome. The polypeptide is Large ribosomal subunit protein uL2 (Mycobacterium bovis (strain ATCC BAA-935 / AF2122/97)).